The following is a 707-amino-acid chain: NADP(+)-dependent formate dehydrogenase subunit beta (707 aa).

Heterotetramer composed of two alpha (FdhA) and two beta (FdhB) subunits.

The protein localises to the cytoplasm. It catalyses the reaction formate + NADP(+) = CO2 + NADPH. Its activity is regulated as follows. Activity is very sensitive to oxygen. The activity in growing cells is enhanced when selenite and molybdate are added together to the growth medium. Tungstate replaces and is better than molybdate. Selenite is incorporated into the enzyme. Requires a sulfhydryl compound for activity. Inhibited by cyanide, EDTA, hypophosphite and mercaptoethanol. Sulfite inhibits the activity with NADP but not with methyl viologen as electron acceptor. Its function is as follows. Component of a dehydrogenase that catalyzes the NADP-dependent reduction of CO(2) to formate, the first step in the synthesis of the methyl group of acetate during synthesis of acetate from CO(2). In vitro, can use methyl viologen and benzyl viologen in addition to its natural electron acceptor. This Moorella thermoacetica (Clostridium thermoaceticum) protein is NADP(+)-dependent formate dehydrogenase subunit beta.